The sequence spans 119 residues: Ribonuclease P protein component (119 aa).

Belongs to the RnpA family. Consists of a catalytic RNA component (M1 or rnpB) and a protein subunit.

It catalyses the reaction Endonucleolytic cleavage of RNA, removing 5'-extranucleotides from tRNA precursor.. RNaseP catalyzes the removal of the 5'-leader sequence from pre-tRNA to produce the mature 5'-terminus. It can also cleave other RNA substrates such as 4.5S RNA. The protein component plays an auxiliary but essential role in vivo by binding to the 5'-leader sequence and broadening the substrate specificity of the ribozyme. The protein is Ribonuclease P protein component of Proteus mirabilis (strain HI4320).